Consider the following 892-residue polypeptide: MSILNKVLSKIIGSRNDRFIKVLYKTVDKITELESKMQALSDEQLKSKTQEFKDRINNKETLDSILVEAFAVIRETSTRVLDLRHHDVQLIGGMVLNDGNIAEMGTGEGKTLVATLPAYLNALSGKGVHIVTVNDYLATRDAQWMGKVFDFLGMSVGVIVSNMAHEDKQSAYLCDIAYATNNELGFDYLRDNMAFTSEQKVQRILNFAIVDEVDSILIDEARTPLIISGPVDDYAQIYQTINHMIPNFTKQIENGEGKEIVIEVAGDYTVDEKHKQVFLTDDGHGKAEHLLIDAEALPEGVSLYDASNILLMQHINSALRAHILFQKDVDYIVQDDEVVIVDEFTGRTMPGRRWSEGLHQAIEAKEGVSIKKENQTLASITFQNYFRLYTTLSGMTGTADTEAVEFQDIYGLETLVVPPNKPSARADKSDKIYLTTQEKFEAIAFDVANCQQIGQPVLVGTSSIENSELISTLLEKNNIKHEVLNAKQHEREAIIIANAGSIGAVTIATNMAGRGTDIVLGGKLSEEATDKQKVDWKIQHDDVIKAGGLHIVGTERNESRRVDNQLRGRAARQGDVGSTRFYLSLEDNLMRIFASKKMASMMQKLGMEKGEAIEHKMVNRAIENAQRKVEGMNYDARKHLLEYDDVASDQRKVIYQLRDDLMSVSDVQDRFISIRVKVIEQFFADYISAELMEEDWDVEGLHNALKLDYSADFPLKQWLDEGIDIDELQLRIIQGLSTICDHKEKIVGTKPMREFEKSVMLQTLDHYWKEHLAAMDYLRKSVNLRGYVQKNPTQEYKHESFAMFTSMLDTINIEIVKSLSSVTINENTNVSDVEQENNEGVQVQHEEVETLGVNDAELEIAKQNKFQKRKKKVGRNDPCSCGSGKKYKKCHG.

Residues Gln89, 107–111 (GEGKT), and Asp517 each bind ATP. Positions 879, 881, 890, and 891 each coordinate Zn(2+).

This sequence belongs to the SecA family. As to quaternary structure, monomer and homodimer. Part of the essential Sec protein translocation apparatus which comprises SecA, SecYEG and auxiliary proteins SecDF-YajC and YidC. It depends on Zn(2+) as a cofactor.

The protein localises to the cell inner membrane. Its subcellular location is the cytoplasm. It carries out the reaction ATP + H2O + cellular proteinSide 1 = ADP + phosphate + cellular proteinSide 2.. In terms of biological role, part of the Sec protein translocase complex. Interacts with the SecYEG preprotein conducting channel. Has a central role in coupling the hydrolysis of ATP to the transfer of proteins into and across the cell membrane, serving as an ATP-driven molecular motor driving the stepwise translocation of polypeptide chains across the membrane. The polypeptide is Protein translocase subunit SecA (Ruthia magnifica subsp. Calyptogena magnifica).